A 139-amino-acid polypeptide reads, in one-letter code: Putative pre-16S rRNA nuclease (139 aa).

It belongs to the YqgF nuclease family.

The protein localises to the cytoplasm. Could be a nuclease involved in processing of the 5'-end of pre-16S rRNA. The polypeptide is Putative pre-16S rRNA nuclease (Streptococcus agalactiae serotype Ia (strain ATCC 27591 / A909 / CDC SS700)).